Consider the following 1132-residue polypeptide: Tyrosine-protein kinase JAK2 (1132 aa).

Positions 1-239 are interaction with cytokine/interferon/growth hormone receptors; the sequence is MGMACLTMTE…RYRFRRFIQQ (239 aa). One can recognise an FERM domain in the interval 37 to 380; it reads PVLLVYLYHS…GYYRLTADAH (344 aa). Position 119 is a phosphotyrosine; by autocatalysis (Tyr-119). Phosphotyrosine is present on residues Tyr-372 and Tyr-373. The SH2; atypical domain occupies 401-482; the sequence is HGPISMDFAI…SLKDLLNCYQ (82 aa). Position 523 is a phosphoserine (Ser-523). The region spanning 545–809 is the Protein kinase 1 domain; sequence LIFNESLGQG…AIIRDLNSLF (265 aa). Residues Tyr-570 and Tyr-813 each carry the phosphotyrosine modification. The 278-residue stretch at 849-1126 folds into the Protein kinase 2 domain; that stretch reads LKFLQQLGKG…RDLALRVDQI (278 aa). 855–863 contributes to the ATP binding site; it reads LGKGNFGSV. Tyr-868 carries the post-translational modification Phosphotyrosine; by autocatalysis. Lys-882 contributes to the ATP binding site. 2 positions are modified to phosphotyrosine; by autocatalysis: Tyr-966 and Tyr-972. The Proton acceptor role is filled by Asp-976. 2 positions are modified to phosphotyrosine; by autocatalysis: Tyr-1007 and Tyr-1008.

It belongs to the protein kinase superfamily. Tyr protein kinase family. JAK subfamily. In terms of assembly, interacts with IL23R, SKB1 and STAM2. Interacts with EPOR. Interacts with LYN. Interacts with SIRPA. Interacts with SH2B1. Interacts with TEC. Interacts with IFNGR2 (via intracellular domain). Interacts with LEPR (Isoform B). Interacts with HSP90AB1; promotes functional activation in a heat shock-dependent manner. Interacts with STRA6. Interacts with RHEX; this interaction occurs in a erythropoietin (EPO)-dependent manner. Interacts with ASB2; the interaction targets JAK2 for Notch-induced proteasomal degradation. The cofactor is Mg(2+). Post-translationally, autophosphorylated, leading to regulate its activity. Leptin promotes phosphorylation on tyrosine residues, including phosphorylation on Tyr-813. Autophosphorylation on Tyr-119 in response to EPO down-regulates its kinase activity. Autophosphorylation on Tyr-868, Tyr-966 and Tyr-972 in response to growth hormone (GH) are required for maximal kinase activity. Also phosphorylated by TEC. Phosphorylated on tyrosine residues in response to interferon gamma signaling. Phosphorylated on tyrosine residues in response to a signaling cascade that is activated by increased cellular retinol. In terms of processing, undergoes Notch-induced ubiquitination and subsequent proteasomal degradation which is mediated by ASB1 or ASB2, the substrate-recognition components of probable ECS E3 ubiquitin-protein ligase complexes.

Its subcellular location is the endomembrane system. It is found in the cytoplasm. The protein localises to the nucleus. It catalyses the reaction L-tyrosyl-[protein] + ATP = O-phospho-L-tyrosyl-[protein] + ADP + H(+). With respect to regulation, regulated by autophosphorylation, can both activate or decrease activity. Heme regulates its activity by enhancing the phosphorylation on Tyr-1007 and Tyr-1008. Functionally, non-receptor tyrosine kinase involved in various processes such as cell growth, development, differentiation or histone modifications. Mediates essential signaling events in both innate and adaptive immunity. In the cytoplasm, plays a pivotal role in signal transduction via its association with type I receptors such as growth hormone (GHR), prolactin (PRLR), leptin (LEPR), erythropoietin (EPOR), thrombopoietin (THPO); or type II receptors including IFN-alpha, IFN-beta, IFN-gamma and multiple interleukins. Following ligand-binding to cell surface receptors, phosphorylates specific tyrosine residues on the cytoplasmic tails of the receptor, creating docking sites for STATs proteins. Subsequently, phosphorylates the STATs proteins once they are recruited to the receptor. Phosphorylated STATs then form homodimer or heterodimers and translocate to the nucleus to activate gene transcription. For example, cell stimulation with erythropoietin (EPO) during erythropoiesis leads to JAK2 autophosphorylation, activation, and its association with erythropoietin receptor (EPOR) that becomes phosphorylated in its cytoplasmic domain. Then, STAT5 (STAT5A or STAT5B) is recruited, phosphorylated and activated by JAK2. Once activated, dimerized STAT5 translocates into the nucleus and promotes the transcription of several essential genes involved in the modulation of erythropoiesis. Part of a signaling cascade that is activated by increased cellular retinol and that leads to the activation of STAT5 (STAT5A or STAT5B). In addition, JAK2 mediates angiotensin-2-induced ARHGEF1 phosphorylation. Plays a role in cell cycle by phosphorylating CDKN1B. Cooperates with TEC through reciprocal phosphorylation to mediate cytokine-driven activation of FOS transcription. In the nucleus, plays a key role in chromatin by specifically mediating phosphorylation of 'Tyr-41' of histone H3 (H3Y41ph), a specific tag that promotes exclusion of CBX5 (HP1 alpha) from chromatin. Up-regulates the potassium voltage-gated channel activity of KCNA3. The chain is Tyrosine-protein kinase JAK2 from Pongo abelii (Sumatran orangutan).